Here is a 261-residue protein sequence, read N- to C-terminus: MAESHLQSSLITASQFFEIWLHFDADGSGYLEGKELQNLIQELLQARKKAGLELSPEMKSFVDQYGQRDDGKIGIVELAHVLPTEENFLLLFRCQQLKSCEEFMKTWRKYDTDHSGFIETEELKNFLKDLLEKANKTVDDTKLAEYTDLMLKLFDSNNDGKLELTEMARLLPVQENFLLKFQGIKMCGKEFNKAFELYDQDGNGYIDENELDALLKDLCEKNKQELDINNITTYKKNIMALSDGGKLYRTDLALILSAGDN.

An N-acetylalanine modification is found at A2. The interval 2–7 is interaction with RANBP9; it reads AESHLQ. 5 EF-hand domains span residues 11-46, 53-88, 98-133, 142-177, and 186-221; these read ITAS…LLQA, ELSP…EENF, KSCE…LLEK, KLAE…QENF, and MCGK…LCEK. Residues D24, D26, S28, Y30, and E35 each coordinate Ca(2+). Residues D111, D113, S115, E122, D155, N157, D159, K161, E166, D199, D201, N203, Y205, and E210 each contribute to the Ca(2+) site.

The protein belongs to the calbindin family. Interacts with RANBP9. In terms of tissue distribution, expressed in the modiolar nerve root and in bushy neurons in the ventral cochlear nucleus (at protein level).

Buffers cytosolic calcium. May stimulate a membrane Ca(2+)-ATPase and a 3',5'-cyclic nucleotide phosphodiesterase. The polypeptide is Calbindin (Calb1) (Mus musculus (Mouse)).